The primary structure comprises 748 residues: Catalase-peroxidase (748 aa).

A cross-link (tryptophyl-tyrosyl-methioninium (Trp-Tyr) (with M-264)) is located at residues 92 to 238 (WHSAGTYRIG…LAAVQMGLIY (147 aa)). His93 serves as the catalytic Proton acceptor. The segment at residues 238–264 (YVNPEGPDGNPDPIASARDIRDTFARM) is a cross-link (tryptophyl-tyrosyl-methioninium (Tyr-Met) (with W-92)). A heme b-binding site is contributed by His279.

Belongs to the peroxidase family. Peroxidase/catalase subfamily. In terms of assembly, homodimer or homotetramer. It depends on heme b as a cofactor. Formation of the three residue Trp-Tyr-Met cross-link is important for the catalase, but not the peroxidase activity of the enzyme.

It carries out the reaction H2O2 + AH2 = A + 2 H2O. The enzyme catalyses 2 H2O2 = O2 + 2 H2O. In terms of biological role, bifunctional enzyme with both catalase and broad-spectrum peroxidase activity. This chain is Catalase-peroxidase, found in Xanthomonas euvesicatoria pv. vesicatoria (strain 85-10) (Xanthomonas campestris pv. vesicatoria).